Here is a 237-residue protein sequence, read N- to C-terminus: Urease accessory protein UreF (237 aa).

This sequence belongs to the UreF family. As to quaternary structure, ureD, UreF and UreG form a complex that acts as a GTP-hydrolysis-dependent molecular chaperone, activating the urease apoprotein by helping to assemble the nickel containing metallocenter of UreC. The UreE protein probably delivers the nickel.

It localises to the cytoplasm. Its function is as follows. Required for maturation of urease via the functional incorporation of the urease nickel metallocenter. The polypeptide is Urease accessory protein UreF (Rhodopseudomonas palustris (strain HaA2)).